Here is a 377-residue protein sequence, read N- to C-terminus: Succinyl-diaminopimelate desuccinylase (377 aa).

Residue H66 coordinates Zn(2+). The active site involves D68. D99 contacts Zn(2+). Residue E133 is the Proton acceptor of the active site. Zn(2+)-binding residues include E134, E162, and H348.

The protein belongs to the peptidase M20A family. DapE subfamily. Homodimer. Requires Zn(2+) as cofactor. Co(2+) serves as cofactor.

The enzyme catalyses N-succinyl-(2S,6S)-2,6-diaminopimelate + H2O = (2S,6S)-2,6-diaminopimelate + succinate. The protein operates within amino-acid biosynthesis; L-lysine biosynthesis via DAP pathway; LL-2,6-diaminopimelate from (S)-tetrahydrodipicolinate (succinylase route): step 3/3. Functionally, catalyzes the hydrolysis of N-succinyl-L,L-diaminopimelic acid (SDAP), forming succinate and LL-2,6-diaminopimelate (DAP), an intermediate involved in the bacterial biosynthesis of lysine and meso-diaminopimelic acid, an essential component of bacterial cell walls. This chain is Succinyl-diaminopimelate desuccinylase, found in Chromobacterium violaceum (strain ATCC 12472 / DSM 30191 / JCM 1249 / CCUG 213 / NBRC 12614 / NCIMB 9131 / NCTC 9757 / MK).